The following is a 956-amino-acid chain: UvrABC system protein A (956 aa).

33–40 (GLSGSGKS) lines the ATP pocket. A C4-type zinc finger spans residues 252–279 (CPYCGFSVGELEPRMFSFNSPFGACPTC). 2 ABC transporter domains span residues 309 to 587 (WRPI…KNSI) and 607 to 936 (GNGL…KYLK). Residue 639 to 646 (GVSGSGKS) participates in ATP binding. A C4-type zinc finger spans residues 738–764 (CEACKGDGIIKIEMHFLPDVYVPCEVC).

This sequence belongs to the ABC transporter superfamily. UvrA family. In terms of assembly, forms a heterotetramer with UvrB during the search for lesions.

The protein resides in the cytoplasm. Functionally, the UvrABC repair system catalyzes the recognition and processing of DNA lesions. UvrA is an ATPase and a DNA-binding protein. A damage recognition complex composed of 2 UvrA and 2 UvrB subunits scans DNA for abnormalities. When the presence of a lesion has been verified by UvrB, the UvrA molecules dissociate. This Listeria innocua serovar 6a (strain ATCC BAA-680 / CLIP 11262) protein is UvrABC system protein A.